We begin with the raw amino-acid sequence, 543 residues long: Chaperonin GroEL 1 (543 aa).

ATP contacts are provided by residues 29–32 (TLGP), 86–90 (DGTTT), Gly413, 479–481 (NAA), and Asp495.

This sequence belongs to the chaperonin (HSP60) family. As to quaternary structure, forms a cylinder of 14 subunits composed of two heptameric rings stacked back-to-back. Interacts with the co-chaperonin GroES.

It is found in the cytoplasm. It catalyses the reaction ATP + H2O + a folded polypeptide = ADP + phosphate + an unfolded polypeptide.. Functionally, together with its co-chaperonin GroES, plays an essential role in assisting protein folding. The GroEL-GroES system forms a nano-cage that allows encapsulation of the non-native substrate proteins and provides a physical environment optimized to promote and accelerate protein folding. In Prochlorococcus marinus (strain NATL2A), this protein is Chaperonin GroEL 1.